Consider the following 32-residue polypeptide: Calcitonin (32 aa).

C1 and C7 are oxidised to a cystine. A Proline amide modification is found at P32.

This sequence belongs to the calcitonin family.

The protein resides in the secreted. In terms of biological role, calcitonin is a peptide hormone that causes a rapid but short-lived drop in the level of calcium and phosphate in blood by promoting the incorporation of those ions in the bones. Calcitonin function is mediated by the calcitonin receptor/CALCR and the CALCR-RAMP2 (AMYR2) receptor complex. The polypeptide is Calcitonin (CALCA) (Sus scrofa (Pig)).